A 1463-amino-acid chain; its full sequence is Collagen alpha-1(I) chain (1463 aa).

The signal sequence occupies residues 1-22; sequence MFSFVDLRLLLLLAATALLTHG. Residues 23–161 constitute a propeptide, N-terminal propeptide; that stretch reads QEEGQEEGQE…PPGLGGNFAP (139 aa). The VWFC domain occupies 38-96; the sequence is VTCVQNGLRYHDRDVWKPVPCQICVCDNGNVLCDDVICDELKDCPNAKVPTDECCPVCP. Positions 98–1217 are disordered; the sequence is GQESPTDQET…AHDGGRYYRA (1120 aa). Positions 138-153 are enriched in pro residues; sequence PGLPGPPGPPGPPGPP. A Pyrrolidone carboxylic acid modification is found at Gln162. Residues 162 to 177 form a nonhelical region (N-terminal) region; sequence QLSYGYDEKSTGISVP. Residue Lys170 is modified to Allysine. Phosphoserine is present on Ser171. The segment at 178–1191 is triple-helical region; the sequence is GPMGPSGPRG…PGPPGPPGPP (1014 aa). Pro189, Pro192, Pro195, Pro204, Pro207, Pro210, Pro225, Pro240, Pro246, Pro255, and Pro261 each carry 4-hydroxyproline. Low complexity predominate over residues 197-216; sequence PQGFQGPPGEPGEPGASGPM. The span at 228–242 shows a compositional bias: basic and acidic residues; it reads NGDDGEAGKPGRPGE. Lys264 carries the post-translational modification 5-hydroxylysine; alternate. A glycan (O-linked (Gal...) hydroxylysine; alternate) is linked at Lys264. Phosphoserine is present on Ser270. Residues Lys276 and Lys285 each carry the 5-hydroxylysine modification. Over residues 278-294 the composition is skewed to low complexity; the sequence is DAGPAGPKGEPGSPGEN. 4-hydroxyproline occurs at positions 288, 291, 297, 306, and 312. The span at 317–330 shows a compositional bias: low complexity; that stretch reads PAGARGNDGATGAA. Pro residues predominate over residues 332 to 344; the sequence is PPGPTGPAGPPGF. 4-hydroxyproline occurs at positions 333, 342, and 345. Gly residues predominate over residues 349–358; that stretch reads GAKGEGGPQG. 4-hydroxyproline is present on residues Pro372, Pro375, Pro387, Pro393, Pro402, Pro408, Pro411, and Pro426. The span at 378 to 417 shows a compositional bias: low complexity; that stretch reads AGAAGPAGNPGADGQPGAKGANGAPGIAGAPGFPGARGPS. Residue Lys429 is modified to 5-hydroxylysine. 4-hydroxyproline occurs at positions 435, 438, 450, 459, 474, 480, 489, and 495. Over residues 484–493 the composition is skewed to gly residues; that stretch reads GERGGPGSRG. A compositionally biased stretch (low complexity) spans 494 to 525; that stretch reads FPGADGVAGPKGPAGERGAPGPAGPKGSPGEA. Lys504 carries the post-translational modification 5-hydroxylysine. 4-hydroxyproline occurs at positions 513, 522, 528, 534, 543, 546, 555, 564, 570, 582, 591, 600, 603, 621, 639, 645, 651, 657, 663, 669, 681, 690, 702, 714, 717, 723, 729, and 738. A compositionally biased stretch (low complexity) spans 537-563; that stretch reads KGLTGSPGSPGPDGKTGPPGPAGQDGR. Over residues 572–591 the composition is skewed to low complexity; that stretch reads ARGQAGVMGFPGPKGAAGEP. Over residues 633–660 the composition is skewed to low complexity; sequence QGPAGSPGFQGLPGPAGPPGEAGKPGEQ. The segment covering 695-723 has biased composition (low complexity); the sequence is PRGANGAPGNDGAKGDAGAPGAPGSQGAP. The short motif at 744–746 is the Cell attachment site element; it reads RGD. Lys750 carries the post-translational modification 5-hydroxylysine. 4-hydroxyproline occurs at positions 756, 771, and 777. Positions 783–797 are enriched in low complexity; that stretch reads AGPSGPAGPTGARGA. The residue at position 786 (Ser786) is a Phosphoserine. A 4-hydroxyproline mark is found at Pro798, Pro804, Pro807, Pro816, Pro822, Pro840, Pro849, and Pro858. Residues 810-837 are compositionally biased toward low complexity; the sequence is AGFAGPPGADGQPGAKGEPGDAGAKGDA. Over residues 839 to 851 the composition is skewed to pro residues; it reads PPGPAGPAGPPGP. Positions 852–882 are enriched in low complexity; the sequence is IGNVGAPGPKGARGSAGPPGATGFPGAAGRV. The residue at position 861 (Lys861) is a 5-hydroxylysine. A 4-hydroxyproline mark is found at Pro870 and Pro876. Pro884 carries the post-translational modification 3-hydroxyproline. 4-hydroxyproline is present on residues Pro885, Pro894, Pro897, Pro918, Pro927, Pro936, Pro945, Pro963, Pro972, Pro975, Pro981, Pro996, Pro1002, Pro1008, Pro1017, and Pro1023. Over residues 930-954 the composition is skewed to low complexity; sequence AGEKGAPGADGPAGAPGTPGPQGIA. Over residues 995–1005 the composition is skewed to pro residues; that stretch reads PPGPMGPPGLA. The residue at position 1032 (Lys1032) is a 5-hydroxylysine. Over residues 1041–1056 the composition is skewed to pro residues; that stretch reads AGPPGAPGAPGAPGPV. Pro1044, Pro1047, and Pro1050 each carry 4-hydroxyproline. A compositionally biased stretch (low complexity) spans 1077–1091; that stretch reads IGPVGARGPAGPQGP. The Cell attachment site signature appears at 1092-1094; the sequence is RGD. Residues 1092 to 1106 show a composition bias toward basic and acidic residues; that stretch reads RGDKGETGEQGDRGI. A 5-hydroxylysine modification is found at Lys1095. Lys1107 is subject to 5-hydroxylysine; alternate. Residue Lys1107 is glycosylated (O-linked (Gal...) hydroxylysine; alternate). 4-hydroxyproline is present on residues Pro1119, Pro1122, Pro1125, Pro1143, and Pro1158. Residues 1125–1149 show a composition bias toward low complexity; the sequence is PGEQGPSGASGPAGPRGPPGSAGSP. A 3-hydroxyproline modification is found at Pro1163. At Pro1164 the chain carries 4-hydroxyproline. Positions 1176–1191 are enriched in pro residues; sequence AGPPGPPGPPGPPGPP. Pro1178 is subject to 3-hydroxyproline. Pro1179 is subject to 4-hydroxyproline. The residue at position 1181 (Pro1181) is a 3-hydroxyproline. 4-hydroxyproline is present on Pro1182. Pro1184 is modified (3-hydroxyproline). 4-hydroxyproline is present on residues Pro1185, Pro1188, and Pro1191. The interval 1192–1215 is nonhelical region (C-terminal); sequence SGGYDLSFLPQPPQEKAHDGGRYY. Over residues 1206–1217 the composition is skewed to basic and acidic residues; it reads EKAHDGGRYYRA. Lys1207 carries the allysine modification. The propeptide at 1218–1463 is C-terminal propeptide; it reads DDANVVRDRD…GFDVGPACFL (246 aa). A Fibrillar collagen NC1 domain is found at 1228–1463; that stretch reads LEVDTTLKSL…GFDVGPACFL (236 aa). 3 disulfide bridges follow: Cys1258-Cys1290, Cys1298-Cys1461, and Cys1369-Cys1414. Asp1276, Asn1278, Gln1279, Cys1281, and Asp1284 together coordinate Ca(2+).

Belongs to the fibrillar collagen family. In terms of assembly, trimers of one alpha 2(I) and two alpha 1(I) chains. Interacts with MRC2. Interacts with TRAM2. Interacts with MFAP4 in a Ca (2+)-dependent manner. Post-translationally, contains mostly 4-hydroxyproline. Proline residues at the third position of the tripeptide repeating unit (G-X-Y) are hydroxylated in some or all of the chains. In terms of processing, contains 3-hydroxyproline at a few sites. This modification occurs on the first proline residue in the sequence motif Gly-Pro-Hyp, where Hyp is 4-hydroxyproline. Lysine residues at the third position of the tripeptide repeating unit (G-X-Y) are 5-hydroxylated in some or all of the chains. Post-translationally, O-glycosylated on hydroxylated lysine residues. The O-linked glycan consists of a Glc-Gal disaccharide. In terms of tissue distribution, forms the fibrils of tendon, ligaments and bones. In bones the fibrils are mineralized with calcium hydroxyapatite.

The protein localises to the secreted. The protein resides in the extracellular space. It localises to the extracellular matrix. Type I collagen is a member of group I collagen (fibrillar forming collagen). The chain is Collagen alpha-1(I) chain (COL1A1) from Bos taurus (Bovine).